We begin with the raw amino-acid sequence, 290 residues long: ATP synthase gamma chain (290 aa).

It belongs to the ATPase gamma chain family. F-type ATPases have 2 components, CF(1) - the catalytic core - and CF(0) - the membrane proton channel. CF(1) has five subunits: alpha(3), beta(3), gamma(1), delta(1), epsilon(1). CF(0) has three main subunits: a, b and c.

The protein resides in the cell membrane. Produces ATP from ADP in the presence of a proton gradient across the membrane. The gamma chain is believed to be important in regulating ATPase activity and the flow of protons through the CF(0) complex. In Wolbachia pipientis subsp. Culex pipiens (strain wPip), this protein is ATP synthase gamma chain.